We begin with the raw amino-acid sequence, 238 residues long: Ribonuclease PH (238 aa).

Phosphate is bound by residues Arg-86 and 124 to 126; that span reads GTR.

The protein belongs to the RNase PH family. As to quaternary structure, homohexameric ring arranged as a trimer of dimers.

The catalysed reaction is tRNA(n+1) + phosphate = tRNA(n) + a ribonucleoside 5'-diphosphate. Its function is as follows. Phosphorolytic 3'-5' exoribonuclease that plays an important role in tRNA 3'-end maturation. Removes nucleotide residues following the 3'-CCA terminus of tRNAs; can also add nucleotides to the ends of RNA molecules by using nucleoside diphosphates as substrates, but this may not be physiologically important. Probably plays a role in initiation of 16S rRNA degradation (leading to ribosome degradation) during starvation. The polypeptide is Ribonuclease PH (Enterobacter sp. (strain 638)).